Consider the following 292-residue polypeptide: [LysW]-aminoadipate kinase (292 aa).

Residues R89 and N193 each contribute to the substrate site.

Belongs to the acetylglutamate kinase family. LysZ subfamily.

It localises to the cytoplasm. It carries out the reaction [amino-group carrier protein]-C-terminal-N-(1,4-dicarboxybutan-1-yl)-L-glutamine + ATP = [amino-group carrier protein]-C-terminal-N-(1-carboxy-5-phosphooxy-5-oxopentan-1-yl)-L-glutamine + ADP. Its pathway is amino-acid biosynthesis; L-lysine biosynthesis via AAA pathway; L-lysine from L-alpha-aminoadipate (Thermus route): step 2/5. Its function is as follows. Catalyzes the phosphorylation of LysW-gamma-alpha-aminoadipate. The chain is [LysW]-aminoadipate kinase from Deinococcus radiodurans (strain ATCC 13939 / DSM 20539 / JCM 16871 / CCUG 27074 / LMG 4051 / NBRC 15346 / NCIMB 9279 / VKM B-1422 / R1).